A 189-amino-acid chain; its full sequence is ATP synthase subunit delta (189 aa).

It belongs to the ATPase delta chain family. In terms of assembly, F-type ATPases have 2 components, F(1) - the catalytic core - and F(0) - the membrane proton channel. F(1) has five subunits: alpha(3), beta(3), gamma(1), delta(1), epsilon(1). F(0) has three main subunits: a(1), b(2) and c(10-14). The alpha and beta chains form an alternating ring which encloses part of the gamma chain. F(1) is attached to F(0) by a central stalk formed by the gamma and epsilon chains, while a peripheral stalk is formed by the delta and b chains.

The protein localises to the cell inner membrane. F(1)F(0) ATP synthase produces ATP from ADP in the presence of a proton or sodium gradient. F-type ATPases consist of two structural domains, F(1) containing the extramembraneous catalytic core and F(0) containing the membrane proton channel, linked together by a central stalk and a peripheral stalk. During catalysis, ATP synthesis in the catalytic domain of F(1) is coupled via a rotary mechanism of the central stalk subunits to proton translocation. Its function is as follows. This protein is part of the stalk that links CF(0) to CF(1). It either transmits conformational changes from CF(0) to CF(1) or is implicated in proton conduction. This is ATP synthase subunit delta from Methylorubrum extorquens (strain CM4 / NCIMB 13688) (Methylobacterium extorquens).